The sequence spans 271 residues: Putative pyruvate, phosphate dikinase regulatory protein (271 aa).

Residue 151-158 coordinates ADP; that stretch reads GISRTSKT.

The protein belongs to the pyruvate, phosphate/water dikinase regulatory protein family. PDRP subfamily.

It catalyses the reaction N(tele)-phospho-L-histidyl/L-threonyl-[pyruvate, phosphate dikinase] + ADP = N(tele)-phospho-L-histidyl/O-phospho-L-threonyl-[pyruvate, phosphate dikinase] + AMP + H(+). The catalysed reaction is N(tele)-phospho-L-histidyl/O-phospho-L-threonyl-[pyruvate, phosphate dikinase] + phosphate + H(+) = N(tele)-phospho-L-histidyl/L-threonyl-[pyruvate, phosphate dikinase] + diphosphate. In terms of biological role, bifunctional serine/threonine kinase and phosphorylase involved in the regulation of the pyruvate, phosphate dikinase (PPDK) by catalyzing its phosphorylation/dephosphorylation. The sequence is that of Putative pyruvate, phosphate dikinase regulatory protein from Streptococcus uberis (strain ATCC BAA-854 / 0140J).